A 320-amino-acid chain; its full sequence is tRNA-cytidine(32) 2-sulfurtransferase (320 aa).

Residues 54 to 59 carry the PP-loop motif motif; that stretch reads SGGKDS. [4Fe-4S] cluster contacts are provided by Cys129, Cys132, and Cys220.

Belongs to the TtcA family. Homodimer. The cofactor is Mg(2+). [4Fe-4S] cluster is required as a cofactor.

Its subcellular location is the cytoplasm. It catalyses the reaction cytidine(32) in tRNA + S-sulfanyl-L-cysteinyl-[cysteine desulfurase] + AH2 + ATP = 2-thiocytidine(32) in tRNA + L-cysteinyl-[cysteine desulfurase] + A + AMP + diphosphate + H(+). Its pathway is tRNA modification. In terms of biological role, catalyzes the ATP-dependent 2-thiolation of cytidine in position 32 of tRNA, to form 2-thiocytidine (s(2)C32). The sulfur atoms are provided by the cysteine/cysteine desulfurase (IscS) system. This Bordetella bronchiseptica (strain ATCC BAA-588 / NCTC 13252 / RB50) (Alcaligenes bronchisepticus) protein is tRNA-cytidine(32) 2-sulfurtransferase.